A 509-amino-acid polypeptide reads, in one-letter code: MGVSSRARWVALGLGVLGLLCAALGVIMILMVPSLIKQQVLKNVRIDPSSLSFGMWKEIPVPFYLSVYFFEVVNPSEVLNGQKPVVRERGPYVYREFRQKVNITFNDNDTVSYIENRSLRFQPDRSQGSESDYIVLPNILVLGGAVMMEDKPTSLKLLMTLGLVTMGQRAFMNRTVGEILWGYEDPFVNFLSKYFPDMFPIKGKFGLFVGMNDSSSGVFTVFTGVQNFSKIHLVDKWNGLSEVNYWHSEQCNMINGTAGQMWAPFMTPESSLEFFSPEACRSMKLTYQESRVFEGIPTYRFTAPDTLFANGSVYPPNEGFCPCRESGIQNVSTCRFGAPLFLSQPHFYNADPVLSEAVLGLNPDPKEHSLFLDIHPVTGIPMNCSVKMQLSLYIKSVKGVGQTGKIEPVVLPLLWFEQSGMMGGKTLNTFYTQLVLMPQVLHYAQYVLLGLGGLLLLVPIIYQLRSQEKCFLFWSGSKKGSQDKEAMQAYSESLMSPAAKGTVLQEAKL.

At 1–11 the chain is on the cytoplasmic side; it reads MGVSSRARWVA. Residues 12–32 traverse the membrane as a helical segment; sequence LGLGVLGLLCAALGVIMILMV. The Extracellular segment spans residues 33–440; it reads PSLIKQQVLK…YTQLVLMPQV (408 aa). Residues Asn102, Asn108, Asn116, Asn173, Asn212, Asn227, Asn255, Asn310, Asn330, and Asn383 are each glycosylated (N-linked (GlcNAc...) asparagine). A disulfide bond links Cys251 and Cys384. Residues 441–461 form a helical membrane-spanning segment; it reads LHYAQYVLLGLGGLLLLVPII. Topologically, residues 462 to 509 are cytoplasmic; sequence YQLRSQEKCFLFWSGSKKGSQDKEAMQAYSESLMSPAAKGTVLQEAKL.

It belongs to the CD36 family. As to quaternary structure, the C-terminal region binds to PDZK1. In terms of processing, N-glycosylated. The six cysteines of the extracellular domain are all involved in intramolecular disulfide bonds.

It localises to the cell membrane. Its subcellular location is the membrane. The protein resides in the caveola. In terms of biological role, receptor for different ligands such as phospholipids, cholesterol ester, lipoproteins, phosphatidylserine and apoptotic cells. Receptor for HDL, mediating selective uptake of cholesteryl ether and HDL-dependent cholesterol efflux. Also facilitates the flux of free and esterified cholesterol between the cell surface and apoB-containing lipoproteins and modified lipoproteins, although less efficiently than HDL. May be involved in the phagocytosis of apoptotic cells, via its phosphatidylserine binding activity. The protein is Scavenger receptor class B member 1 (Scarb1) of Rattus norvegicus (Rat).